The chain runs to 140 residues: Nucleoside diphosphate kinase (140 aa).

6 residues coordinate ATP: Lys9, Phe57, Arg85, Thr91, Arg102, and Asn112. His115 acts as the Pros-phosphohistidine intermediate in catalysis.

Belongs to the NDK family. Homotetramer. Requires Mg(2+) as cofactor.

It is found in the cytoplasm. The enzyme catalyses a 2'-deoxyribonucleoside 5'-diphosphate + ATP = a 2'-deoxyribonucleoside 5'-triphosphate + ADP. The catalysed reaction is a ribonucleoside 5'-diphosphate + ATP = a ribonucleoside 5'-triphosphate + ADP. Its function is as follows. Major role in the synthesis of nucleoside triphosphates other than ATP. The ATP gamma phosphate is transferred to the NDP beta phosphate via a ping-pong mechanism, using a phosphorylated active-site intermediate. This chain is Nucleoside diphosphate kinase, found in Chlorobium luteolum (strain DSM 273 / BCRC 81028 / 2530) (Pelodictyon luteolum).